Here is a 376-residue protein sequence, read N- to C-terminus: CYP enzymes assisting alcohol dehydrogenase (376 aa).

Zn(2+) is bound by residues C43, T45, H64, C94, C97, C100, C108, and C173. Residue T45 coordinates NAD(+). Substrate contacts are provided by T45 and H64. NAD(+)-binding positions include G199–G204, D223, K228, L294–A296, F320, and K371.

It belongs to the zinc-containing alcohol dehydrogenase family. Class-III subfamily. As to quaternary structure, homodimer. It depends on Zn(2+) as a cofactor.

Its pathway is alkaloid biosynthesis. Its function is as follows. May be a positive catalyzer of strictosidine production by assisting secologanin biosynthesis, thus being involved in monoterpene indole alkaloids accumulation. This Catharanthus roseus (Madagascar periwinkle) protein is CYP enzymes assisting alcohol dehydrogenase.